The sequence spans 184 residues: Holliday junction branch migration complex subunit RuvA (184 aa).

The tract at residues 1-62 (MIVGLVGEVL…EDSESLYGFV (62 aa)) is domain I. Residues 63 to 134 (DINEKKMFDR…ELGEFDISES (72 aa)) are domain II. The tract at residues 134-135 (SN) is flexible linker. The segment at 136-184 (VTSSAFQEASMALQSLGFKKEQIQKALQECTATDTASLVKEALKKIQKL) is domain III.

The protein belongs to the RuvA family. Homotetramer. Forms an RuvA(8)-RuvB(12)-Holliday junction (HJ) complex. HJ DNA is sandwiched between 2 RuvA tetramers; dsDNA enters through RuvA and exits via RuvB. An RuvB hexamer assembles on each DNA strand where it exits the tetramer. Each RuvB hexamer is contacted by two RuvA subunits (via domain III) on 2 adjacent RuvB subunits; this complex drives branch migration. In the full resolvosome a probable DNA-RuvA(4)-RuvB(12)-RuvC(2) complex forms which resolves the HJ.

Its subcellular location is the cytoplasm. Its function is as follows. The RuvA-RuvB-RuvC complex processes Holliday junction (HJ) DNA during genetic recombination and DNA repair, while the RuvA-RuvB complex plays an important role in the rescue of blocked DNA replication forks via replication fork reversal (RFR). RuvA specifically binds to HJ cruciform DNA, conferring on it an open structure. The RuvB hexamer acts as an ATP-dependent pump, pulling dsDNA into and through the RuvAB complex. HJ branch migration allows RuvC to scan DNA until it finds its consensus sequence, where it cleaves and resolves the cruciform DNA. This Nitratiruptor sp. (strain SB155-2) protein is Holliday junction branch migration complex subunit RuvA.